The following is a 132-amino-acid chain: MDVFQEGLAMVVQDPLLCDLPIQVTLEEVNSQIALEYGQAMTVRVCKMDGEVMPVVVVQSATVLDLKKAIQRYVQLKQEREGGIQHISWSYVWRTYHLTSAGEKLTEDRKKLRDYGIRNRDEVSFIKKLRQK.

The 92-residue stretch at 41–132 (MTVRVCKMDG…VSFIKKLRQK (92 aa)) folds into the Ubiquitin-like domain.

In terms of assembly, component of the U11/U12 snRNPs that are part of the U12-type spliceosome.

It is found in the nucleus. The protein is U11/U12 small nuclear ribonucleoprotein 25 kDa protein (SNRNP25) of Homo sapiens (Human).